The following is a 177-amino-acid chain: ATP-dependent protease subunit HslV (177 aa).

Threonine 6 is a catalytic residue. Residues serine 162, cysteine 165, and threonine 168 each coordinate Na(+).

It belongs to the peptidase T1B family. HslV subfamily. As to quaternary structure, a double ring-shaped homohexamer of HslV is capped on each side by a ring-shaped HslU homohexamer. The assembly of the HslU/HslV complex is dependent on binding of ATP.

The protein localises to the cytoplasm. It carries out the reaction ATP-dependent cleavage of peptide bonds with broad specificity.. Allosterically activated by HslU binding. Protease subunit of a proteasome-like degradation complex believed to be a general protein degrading machinery. The polypeptide is ATP-dependent protease subunit HslV (Desulforudis audaxviator (strain MP104C)).